The sequence spans 364 residues: Succinyl-diaminopimelate desuccinylase (364 aa).

A Zn(2+)-binding site is contributed by His-66. Asp-68 is an active-site residue. Asp-97 serves as a coordination point for Zn(2+). Catalysis depends on Glu-127, which acts as the Proton acceptor. Positions 128, 156, and 341 each coordinate Zn(2+).

The protein belongs to the peptidase M20A family. DapE subfamily. In terms of assembly, homodimer. It depends on Zn(2+) as a cofactor. Requires Co(2+) as cofactor.

The enzyme catalyses N-succinyl-(2S,6S)-2,6-diaminopimelate + H2O = (2S,6S)-2,6-diaminopimelate + succinate. It functions in the pathway amino-acid biosynthesis; L-lysine biosynthesis via DAP pathway; LL-2,6-diaminopimelate from (S)-tetrahydrodipicolinate (succinylase route): step 3/3. Its function is as follows. Catalyzes the hydrolysis of N-succinyl-L,L-diaminopimelic acid (SDAP), forming succinate and LL-2,6-diaminopimelate (DAP), an intermediate involved in the bacterial biosynthesis of lysine and meso-diaminopimelic acid, an essential component of bacterial cell walls. In Wolinella succinogenes (strain ATCC 29543 / DSM 1740 / CCUG 13145 / JCM 31913 / LMG 7466 / NCTC 11488 / FDC 602W) (Vibrio succinogenes), this protein is Succinyl-diaminopimelate desuccinylase.